The chain runs to 141 residues: Hemoglobin subunit alpha-A (141 aa).

In terms of domain architecture, Globin spans 1–141 (VLSAADKNNV…VGTVLTAKYR (141 aa)). His58 serves as a coordination point for O2. His87 contributes to the heme b binding site.

The protein belongs to the globin family. Heterotetramer of two alpha chains and two beta chains. Red blood cells.

Its function is as follows. Involved in oxygen transport from the lung to the various peripheral tissues. The chain is Hemoglobin subunit alpha-A (HBAA) from Phasianus colchicus colchicus (Black-necked pheasant).